Here is a 141-residue protein sequence, read N- to C-terminus: Acetyltransferase YpeA (141 aa).

Residues 1–141 (MEIRVFRQED…GKRLIEDEEY (141 aa)) enclose the N-acetyltransferase domain.

This sequence belongs to the acetyltransferase family. YpeA subfamily.

The chain is Acetyltransferase YpeA from Shigella boydii serotype 4 (strain Sb227).